A 354-amino-acid polypeptide reads, in one-letter code: MFKVLVINPGSTSTKVALYEDEKEIVRSDITHDVETLKNYKSVIEQLDLRLEAINKWLSENGIKVLELSAIVVRGGLIKPVQSGTYVVNDIMLEDLRKGVGGEHPSNLGGIIGRALADPYGIPVYTLDPVAVDEMEDVARISGLPELPRKSQSHALNIKACIHRYARENNLKEEELNMIVAHMGGGISVAAIKGGRIVDVNNANQMGPFSPERTGSLPSMKVVEMCYSGKYTLEEMKKKIVGMGGLVAHLGTNDAREVVKRIEAGDKKAKLVFEAMAYQIAKEIGRMAAVLKGDVKTIILTGGLAYSKPLIEIIIDMVGFIAPITLYPGGDEMEALRDGALRVLRGQETPKIYG.

This sequence belongs to the acetokinase family.

Its subcellular location is the cytoplasm. It carries out the reaction butanoate + ATP = butanoyl phosphate + ADP. This Caldanaerobacter subterraneus subsp. tengcongensis (strain DSM 15242 / JCM 11007 / NBRC 100824 / MB4) (Thermoanaerobacter tengcongensis) protein is Probable butyrate kinase 2.